The primary structure comprises 1361 residues: DNA-directed RNA polymerase subunit beta'' (1361 aa).

The Zn(2+) site is built by Cys224, Cys295, Cys302, and Cys305.

Belongs to the RNA polymerase beta' chain family. RpoC2 subfamily. In plastids the minimal PEP RNA polymerase catalytic core is composed of four subunits: alpha, beta, beta', and beta''. When a (nuclear-encoded) sigma factor is associated with the core the holoenzyme is formed, which can initiate transcription. Zn(2+) is required as a cofactor.

It is found in the plastid. The protein localises to the chloroplast. The enzyme catalyses RNA(n) + a ribonucleoside 5'-triphosphate = RNA(n+1) + diphosphate. Functionally, DNA-dependent RNA polymerase catalyzes the transcription of DNA into RNA using the four ribonucleoside triphosphates as substrates. The polypeptide is DNA-directed RNA polymerase subunit beta'' (Spinacia oleracea (Spinach)).